The chain runs to 90 residues: Evasin P1128 (90 aa).

Positions 1–18 (MFIALGIQLFVAVTYAAG) are cleaved as a signal peptide. 3 disulfide bridges follow: C29/C51, C33/C53, and C44/C64. N32 carries N-linked (GlcNAc...) asparagine glycosylation.

The protein localises to the secreted. Functionally, salivary chemokine-binding protein which binds to host chemokines CXCL1, CXCL2, CXCL3, CXCL5 and CXCL8. This chain is Evasin P1128, found in Ixodes ricinus (Common tick).